We begin with the raw amino-acid sequence, 1230 residues long: ATP-dependent helicase/nuclease subunit A (1230 aa).

In terms of domain architecture, UvrD-like helicase ATP-binding spans 3 to 473; sequence TKFTKNQQRA…IDLADNFRSQ (471 aa). 24–31 is a binding site for ATP; that stretch reads ASAGSGKT. Residues 500-782 enclose the UvrD-like helicase C-terminal domain; the sequence is EAKLVPKAAY…RIMTIHASKG (283 aa).

This sequence belongs to the helicase family. AddA subfamily. Heterodimer of AddA and AddB/RexB. Mg(2+) is required as a cofactor.

The catalysed reaction is Couples ATP hydrolysis with the unwinding of duplex DNA by translocating in the 3'-5' direction.. The enzyme catalyses ATP + H2O = ADP + phosphate + H(+). In terms of biological role, the heterodimer acts as both an ATP-dependent DNA helicase and an ATP-dependent, dual-direction single-stranded exonuclease. Recognizes the chi site generating a DNA molecule suitable for the initiation of homologous recombination. The AddA nuclease domain is required for chi fragment generation; this subunit has the helicase and 3' -&gt; 5' nuclease activities. The protein is ATP-dependent helicase/nuclease subunit A of Leuconostoc mesenteroides subsp. mesenteroides (strain ATCC 8293 / DSM 20343 / BCRC 11652 / CCM 1803 / JCM 6124 / NCDO 523 / NBRC 100496 / NCIMB 8023 / NCTC 12954 / NRRL B-1118 / 37Y).